Reading from the N-terminus, the 154-residue chain is Aminoalkylphosphonate N-acetyltransferase (154 aa).

In terms of domain architecture, N-acetyltransferase spans 14–154 (CELRHATTED…QSHFRFTKAL (141 aa)).

As to quaternary structure, homodimer. Requires a divalent metal cation as cofactor.

The catalysed reaction is aminomethylphosphonate + acetyl-CoA = 2-N-acetamidomethylphosphonate + CoA. It catalyses the reaction (S)-1-aminoethylphosphonate + acetyl-CoA = [(1S)-1-acetamidoethyl]phosphonate + CoA. Aminoalkylphosphonate N-acetyltransferase which is able to acetylate a range of aminoalkylphosphonic acids, including (S)-1-aminoethylphosphonate ((S)-1AEP) and 2-aminoethylphosphonate, using acetyl-CoA as acetyl donor. Its physiological role in S.typhimurium is unclear. However, by acetylating (S)-1AEP, PhnO would protect against the deleterious effects of (S)-1AEP, a structural analog of D-alanine that has antibacterial properties. The polypeptide is Aminoalkylphosphonate N-acetyltransferase (Salmonella typhimurium (strain LT2 / SGSC1412 / ATCC 700720)).